We begin with the raw amino-acid sequence, 1182 residues long: Protein patched homolog 2 (1182 aa).

Residues 1–57 (MVRPLSLGELPPSYTPPARSSAPHILAGSLQAPLWLRAYFQGLLFSLGCRIQKHCGK) are Cytoplasmic-facing. The helical transmembrane segment at 58-78 (VLFLGLVAFGALALGLRVAVI) threads the bilayer. At 79-394 (ETDLEQLWVE…DILRAFSEVS (316 aa)) the chain is on the extracellular side. N370 carries N-linked (GlcNAc...) asparagine glycosylation. An SSD domain is found at 394–552 (STTRVVGGYL…MLVFPAILSL (159 aa)). The helical transmembrane segment at 395–414 (TTRVVGGYLLMLAYACVTML) threads the bilayer. Over 415-428 (RWDCAQSQGAVGLA) the chain is Cytoplasmic. A helical transmembrane segment spans residues 429 to 449 (GVLLVALAVASGLGLCALLGI). The Extracellular segment spans residues 450 to 457 (TFNAATTQ). The helical transmembrane segment at 458 to 478 (VLPFLALGIGVDDIFLLAHAF) threads the bilayer. At 479–501 (TKAPPDTPLPERMGECLRSTGTS) the chain is on the cytoplasmic side. Residues 502 to 522 (VALTSVNNMVAFFMAALVPIP) form a helical membrane-spanning segment. At 523 to 531 (ALRAFSLQA) the chain is on the extracellular side. A helical membrane pass occupies residues 532 to 552 (AIVVGCNFAAVMLVFPAILSL). Residues 553–686 (DLRRRHRQRL…APLLLQTRAK (134 aa)) lie on the Cytoplasmic side of the membrane. Residues 687–707 (ALVLLFFGALLGLSLYGATLV) form a helical membrane-spanning segment. At 708–963 (QDGLALTDVV…WEQYLGLRRC (256 aa)) the chain is on the extracellular side. A glycan (N-linked (GlcNAc...) asparagine) is linked at N812. A helical membrane pass occupies residues 964-984 (FLLAVCILLVCTFLVCALLLL). Residues 985–991 (SPWTAGL) are Cytoplasmic-facing. A helical transmembrane segment spans residues 992-1012 (IVLVLAMMTVELFGIMGFLGI). Residue K1013 is a topological domain, extracellular. A helical membrane pass occupies residues 1014-1034 (LSAIPVVILVASIGIGVEFTV). The Cytoplasmic segment spans residues 1035 to 1064 (HVALGFLTSHGSRNLRAASALEQTFAPVTD). Residues 1065-1085 (GAVSTLLGLLMLAGSNFDFII) form a helical membrane-spanning segment. A topological domain (extracellular) is located at residue R1086. Residues 1087–1107 (YFFVVLTVLTLLGLLHGLLLL) form a helical membrane-spanning segment. Topologically, residues 1108–1182 (PVLLSILGPP…YVHPASEEPT (75 aa)) are cytoplasmic.

The protein belongs to the patched family. As to expression, expressed in epithelial cells of the developing hair, tooth and whisker.

It localises to the membrane. In terms of biological role, plays a role in the control of cellular growth. May have a role in epidermal development. May act as a receptor for Sonic hedgehog (SHH). The sequence is that of Protein patched homolog 2 (Ptch2) from Mus musculus (Mouse).